We begin with the raw amino-acid sequence, 468 residues long: Tapasin-related protein (468 aa).

An N-terminal signal peptide occupies residues 1–18 (MGTQEGWCLLLCLALSGA). Over 19–405 (AETKPHPAEG…STQVVPPERR (387 aa)) the chain is Lumenal. The region spanning 181–297 (PQGTVRTAVE…SLYRAQQIIQ (117 aa)) is the Ig-like V-type domain. 2 disulfides stabilise this stretch: Cys-212/Cys-283 and Cys-321/Cys-382. The Ig-like C1-type domain occupies 304–394 (PKVRLSLANE…THISLEEPLG (91 aa)). A helical transmembrane segment spans residues 406 to 426 (TALGVIFASSLFLLALMFLGL). Topologically, residues 427-468 (QRRQAPTGLGLLQAERWETTSCADTQSSHLHEDRTARVSQPS) are cytoplasmic. Positions 449–468 (ADTQSSHLHEDRTARVSQPS) are disordered.

In terms of assembly, interacts with peptide-free HLA-A*02-B2M complexes or those loaded with low affinity peptides, likely facilitating peptide exchange onto higher affinity peptides. Interacts with MR1 in a ligand-independent way; this interaction may stabilize MR1 pool and facilitate ligand loading and dissociation.

The protein localises to the cell membrane. It localises to the endoplasmic reticulum membrane. Its subcellular location is the microsome membrane. The protein resides in the golgi apparatus membrane. Functionally, component of the antigen processing and presentation pathway, which binds to MHC class I coupled with beta2-microglobulin/B2M. Association between TAPBPR and MHC class I occurs in the absence of a functional peptide-loading complex (PLC). The polypeptide is Tapasin-related protein (TAPBPL) (Homo sapiens (Human)).